The primary structure comprises 163 residues: Protein-export protein SecB (163 aa).

The protein belongs to the SecB family. In terms of assembly, homotetramer, a dimer of dimers. One homotetramer interacts with 1 SecA dimer.

The protein localises to the cytoplasm. Its function is as follows. One of the proteins required for the normal export of preproteins out of the cell cytoplasm. It is a molecular chaperone that binds to a subset of precursor proteins, maintaining them in a translocation-competent state. It also specifically binds to its receptor SecA. In Azotobacter vinelandii (strain DJ / ATCC BAA-1303), this protein is Protein-export protein SecB.